The sequence spans 313 residues: GTPase Era (313 aa).

The 174-residue stretch at 13–186 folds into the Era-type G domain; that stretch reads RSGFVSFVGR…ADLLVGLLPE (174 aa). The G1 stretch occupies residues 21 to 28; it reads GRPNAGKS. 21-28 provides a ligand contact to GTP; that stretch reads GRPNAGKS. The segment at 47–51 is G2; that stretch reads QTTRT. The G3 stretch occupies residues 68 to 71; it reads DTPG. Residues 68-72 and 131-134 each bind GTP; these read DTPGL and TKTD. The segment at 131–134 is G4; that stretch reads TKTD. The tract at residues 165-167 is G5; that stretch reads VSA. The KH type-2 domain maps to 217-299; the sequence is LRDELPHSVA…YLDLHVKIAK (83 aa).

The protein belongs to the TRAFAC class TrmE-Era-EngA-EngB-Septin-like GTPase superfamily. Era GTPase family. Monomer.

The protein resides in the cytoplasm. Its subcellular location is the cell membrane. An essential GTPase that binds both GDP and GTP, with rapid nucleotide exchange. Plays a role in 16S rRNA processing and 30S ribosomal subunit biogenesis and possibly also in cell cycle regulation and energy metabolism. The polypeptide is GTPase Era (Nocardioides sp. (strain ATCC BAA-499 / JS614)).